We begin with the raw amino-acid sequence, 288 residues long: Ribosomal RNA small subunit methyltransferase A (288 aa).

The span at 1–14 (MSKNQGGNKHQGGS) shows a compositional bias: polar residues. Residues 1 to 21 (MSKNQGGNKHQGGSKTHLGHR) are disordered. S-adenosyl-L-methionine contacts are provided by Asn29, Leu31, Gly56, Glu77, Asp102, and Asn122.

Belongs to the class I-like SAM-binding methyltransferase superfamily. rRNA adenine N(6)-methyltransferase family. RsmA subfamily.

It is found in the cytoplasm. The catalysed reaction is adenosine(1518)/adenosine(1519) in 16S rRNA + 4 S-adenosyl-L-methionine = N(6)-dimethyladenosine(1518)/N(6)-dimethyladenosine(1519) in 16S rRNA + 4 S-adenosyl-L-homocysteine + 4 H(+). Functionally, specifically dimethylates two adjacent adenosines (A1518 and A1519) in the loop of a conserved hairpin near the 3'-end of 16S rRNA in the 30S particle. May play a critical role in biogenesis of 30S subunits. This Idiomarina loihiensis (strain ATCC BAA-735 / DSM 15497 / L2-TR) protein is Ribosomal RNA small subunit methyltransferase A.